The chain runs to 186 residues: Large ribosomal subunit protein bL17 (186 aa).

The disordered stretch occupies residues 123-186 (SEADRARRVK…ADEAEGSSED (64 aa)). Positions 139–177 (EAAAAAPQAAVEPEAVEAAPAPDAPEAAPEAEAAAPQPA) are enriched in low complexity.

This sequence belongs to the bacterial ribosomal protein bL17 family. Part of the 50S ribosomal subunit. Contacts protein L32.

The chain is Large ribosomal subunit protein bL17 from Mycobacterium avium (strain 104).